Here is a 39-residue protein sequence, read N- to C-terminus: Non-specific lipid-transfer protein (39 aa).

Belongs to the plant LTP family.

Functionally, plant non-specific lipid-transfer proteins transfer phospholipids as well as galactolipids across membranes. May play a role in wax or cutin deposition in the cell walls of expanding epidermal cells and certain secretory tissues. The chain is Non-specific lipid-transfer protein from Musa acuminata (Banana).